The primary structure comprises 371 residues: UDP-N-acetylglucosamine--N-acetylmuramyl-(pentapeptide) pyrophosphoryl-undecaprenol N-acetylglucosamine transferase (371 aa).

UDP-N-acetyl-alpha-D-glucosamine contacts are provided by residues 10 to 12 (TGG), Asn-124, Arg-166, Ser-196, and Gln-301.

The protein belongs to the glycosyltransferase 28 family. MurG subfamily.

Its subcellular location is the cell membrane. It catalyses the reaction di-trans,octa-cis-undecaprenyl diphospho-N-acetyl-alpha-D-muramoyl-L-alanyl-D-glutamyl-meso-2,6-diaminopimeloyl-D-alanyl-D-alanine + UDP-N-acetyl-alpha-D-glucosamine = di-trans,octa-cis-undecaprenyl diphospho-[N-acetyl-alpha-D-glucosaminyl-(1-&gt;4)]-N-acetyl-alpha-D-muramoyl-L-alanyl-D-glutamyl-meso-2,6-diaminopimeloyl-D-alanyl-D-alanine + UDP + H(+). It participates in cell wall biogenesis; peptidoglycan biosynthesis. Its function is as follows. Cell wall formation. Catalyzes the transfer of a GlcNAc subunit on undecaprenyl-pyrophosphoryl-MurNAc-pentapeptide (lipid intermediate I) to form undecaprenyl-pyrophosphoryl-MurNAc-(pentapeptide)GlcNAc (lipid intermediate II). This Moorella thermoacetica (strain ATCC 39073 / JCM 9320) protein is UDP-N-acetylglucosamine--N-acetylmuramyl-(pentapeptide) pyrophosphoryl-undecaprenol N-acetylglucosamine transferase.